A 117-amino-acid polypeptide reads, in one-letter code: Hemerythrin subunit beta (117 aa).

Residues His24, His53, Glu57, His72, His76, His105, and Asp110 each contribute to the Fe cation site.

It belongs to the hemerythrin family. Octamer composed of two types of chains: alpha and beta.

Functionally, hemerythrin is a respiratory protein in blood cells of certain marine worms. The oxygen-binding site in each chain contains two iron atoms. The sequence is that of Hemerythrin subunit beta from Lingula anatina (Brachiopod).